Reading from the N-terminus, the 266-residue chain is Nickel import ATP-binding protein NikE (266 aa).

The ABC transporter domain occupies 4-252 (ISADNIVKIY…RHPASRLLRE (249 aa)). 45–52 (GRSGCGKS) serves as a coordination point for ATP.

It belongs to the ABC transporter superfamily. Nickel importer (TC 3.A.1.5.3) family. As to quaternary structure, the complex is composed of two ATP-binding proteins (NikD and NikE), two transmembrane proteins (NikB and NikC) and a solute-binding protein (NikA).

The protein resides in the cell inner membrane. The enzyme catalyses Ni(2+)(out) + ATP + H2O = Ni(2+)(in) + ADP + phosphate + H(+). Part of the ABC transporter complex NikABCDE involved in nickel import. Responsible for energy coupling to the transport system. This is Nickel import ATP-binding protein NikE from Brucella suis biovar 1 (strain 1330).